The chain runs to 489 residues: NAC domain-containing protein 74 (489 aa).

The region spanning 9–159 (LPPGFGFHPK…AYVLCRITKR (151 aa)) is the NAC domain. The DNA-binding element occupies 108–165 (IGTKKTLVFHEGRPPTGRRTEWIMHEYYIDERECQACPDMKDAYVLCRITKRNDWIPG). Residues 413–427 (KNQAHDVASTKRSDA) show a composition bias toward basic and acidic residues. The segment at 413–435 (KNQAHDVASTKRSDAGKPSTELS) is disordered. Residues 456 to 476 (WNMILVAGFAIGVAVVALHIG) form a helical membrane-spanning segment.

In terms of tissue distribution, widely expressed.

It is found in the nucleus. The protein resides in the cell membrane. Its function is as follows. Transcription activator involved in heat and endoplasmic reticulum (ER) stress responses. Regulates the expression of genes involved in ER protein folding and heat stress-responsive genes. Binds directly to the promoter of BZIP74 and regulates its expression in response to heat stress. This is NAC domain-containing protein 74 from Oryza sativa subsp. japonica (Rice).